We begin with the raw amino-acid sequence, 503 residues long: ATP synthase subunit alpha (503 aa).

170–177 lines the ATP pocket; the sequence is GDKQTGKT.

This sequence belongs to the ATPase alpha/beta chains family. In terms of assembly, F-type ATPases have 2 components, CF(1) - the catalytic core - and CF(0) - the membrane proton channel. CF(1) has five subunits: alpha(3), beta(3), gamma(1), delta(1), epsilon(1). CF(0) has three main subunits: a(1), b(2) and c(9-12). The alpha and beta chains form an alternating ring which encloses part of the gamma chain. CF(1) is attached to CF(0) by a central stalk formed by the gamma and epsilon chains, while a peripheral stalk is formed by the delta and b chains.

It localises to the cell inner membrane. It catalyses the reaction ATP + H2O + 4 H(+)(in) = ADP + phosphate + 5 H(+)(out). Its function is as follows. Produces ATP from ADP in the presence of a proton gradient across the membrane. The alpha chain is a regulatory subunit. In Helicobacter pylori (strain HPAG1), this protein is ATP synthase subunit alpha.